A 272-amino-acid polypeptide reads, in one-letter code: Dihydropteroate synthase (272 aa).

The Pterin-binding domain maps to 1–251 (MIKTKIMGIL…GVRVHNVLLN (251 aa)). Asparagine 11 contributes to the Mg(2+) binding site. Residues threonine 51, aspartate 89, asparagine 108, aspartate 172, lysine 208, and 244–246 (RVH) each bind (7,8-dihydropterin-6-yl)methyl diphosphate.

Belongs to the DHPS family. In terms of assembly, homodimer. Mg(2+) is required as a cofactor.

The enzyme catalyses (7,8-dihydropterin-6-yl)methyl diphosphate + 4-aminobenzoate = 7,8-dihydropteroate + diphosphate. It functions in the pathway cofactor biosynthesis; tetrahydrofolate biosynthesis; 7,8-dihydrofolate from 2-amino-4-hydroxy-6-hydroxymethyl-7,8-dihydropteridine diphosphate and 4-aminobenzoate: step 1/2. In terms of biological role, catalyzes the condensation of para-aminobenzoate (pABA) with 6-hydroxymethyl-7,8-dihydropterin diphosphate (DHPt-PP) to form 7,8-dihydropteroate (H2Pte), the immediate precursor of folate derivatives. The chain is Dihydropteroate synthase (folP) from Staphylococcus epidermidis (strain ATCC 35984 / DSM 28319 / BCRC 17069 / CCUG 31568 / BM 3577 / RP62A).